Consider the following 262-residue polypeptide: Hydroxyethylthiazole kinase (262 aa).

Methionine 50 is a substrate binding site. 2 residues coordinate ATP: arginine 125 and threonine 171. Glycine 198 is a binding site for substrate.

It belongs to the Thz kinase family. The cofactor is Mg(2+).

It carries out the reaction 5-(2-hydroxyethyl)-4-methylthiazole + ATP = 4-methyl-5-(2-phosphooxyethyl)-thiazole + ADP + H(+). Its pathway is cofactor biosynthesis; thiamine diphosphate biosynthesis; 4-methyl-5-(2-phosphoethyl)-thiazole from 5-(2-hydroxyethyl)-4-methylthiazole: step 1/1. Catalyzes the phosphorylation of the hydroxyl group of 4-methyl-5-beta-hydroxyethylthiazole (THZ). This Escherichia coli O45:K1 (strain S88 / ExPEC) protein is Hydroxyethylthiazole kinase.